Here is a 243-residue protein sequence, read N- to C-terminus: 1-(5-phosphoribosyl)-5-[(5-phosphoribosylamino)methylideneamino] imidazole-4-carboxamide isomerase (243 aa).

Asp-10 acts as the Proton acceptor in catalysis. Residue Asp-131 is the Proton donor of the active site.

Belongs to the HisA/HisF family.

The protein resides in the cytoplasm. It carries out the reaction 1-(5-phospho-beta-D-ribosyl)-5-[(5-phospho-beta-D-ribosylamino)methylideneamino]imidazole-4-carboxamide = 5-[(5-phospho-1-deoxy-D-ribulos-1-ylimino)methylamino]-1-(5-phospho-beta-D-ribosyl)imidazole-4-carboxamide. It functions in the pathway amino-acid biosynthesis; L-histidine biosynthesis; L-histidine from 5-phospho-alpha-D-ribose 1-diphosphate: step 4/9. This chain is 1-(5-phosphoribosyl)-5-[(5-phosphoribosylamino)methylideneamino] imidazole-4-carboxamide isomerase, found in Rhizorhabdus wittichii (strain DSM 6014 / CCUG 31198 / JCM 15750 / NBRC 105917 / EY 4224 / RW1) (Sphingomonas wittichii).